A 450-amino-acid polypeptide reads, in one-letter code: 3-phosphoshikimate 1-carboxyvinyltransferase (450 aa).

3 residues coordinate 3-phosphoshikimate: Lys-28, Ser-29, and Arg-33. Residue Lys-28 participates in phosphoenolpyruvate binding. Phosphoenolpyruvate contacts are provided by Gly-100 and Arg-128. 3-phosphoshikimate-binding residues include Ser-173, Gln-175, Asp-326, and Lys-353. Gln-175 serves as a coordination point for phosphoenolpyruvate. Asp-326 serves as the catalytic Proton acceptor. Phosphoenolpyruvate-binding residues include Arg-357 and Arg-402.

Belongs to the EPSP synthase family. As to quaternary structure, monomer.

The protein localises to the cytoplasm. It carries out the reaction 3-phosphoshikimate + phosphoenolpyruvate = 5-O-(1-carboxyvinyl)-3-phosphoshikimate + phosphate. It functions in the pathway metabolic intermediate biosynthesis; chorismate biosynthesis; chorismate from D-erythrose 4-phosphate and phosphoenolpyruvate: step 6/7. Functionally, catalyzes the transfer of the enolpyruvyl moiety of phosphoenolpyruvate (PEP) to the 5-hydroxyl of shikimate-3-phosphate (S3P) to produce enolpyruvyl shikimate-3-phosphate and inorganic phosphate. The chain is 3-phosphoshikimate 1-carboxyvinyltransferase from Brucella melitensis biotype 1 (strain ATCC 23456 / CCUG 17765 / NCTC 10094 / 16M).